The sequence spans 174 residues: Crossover junction endodeoxyribonuclease RuvC (174 aa).

Active-site residues include Asp8, Glu69, and Asp141. Residues Asp8, Glu69, and Asp141 each coordinate Mg(2+).

The protein belongs to the RuvC family. In terms of assembly, homodimer which binds Holliday junction (HJ) DNA. The HJ becomes 2-fold symmetrical on binding to RuvC with unstacked arms; it has a different conformation from HJ DNA in complex with RuvA. In the full resolvosome a probable DNA-RuvA(4)-RuvB(12)-RuvC(2) complex forms which resolves the HJ. Requires Mg(2+) as cofactor.

The protein localises to the cytoplasm. It catalyses the reaction Endonucleolytic cleavage at a junction such as a reciprocal single-stranded crossover between two homologous DNA duplexes (Holliday junction).. Its function is as follows. The RuvA-RuvB-RuvC complex processes Holliday junction (HJ) DNA during genetic recombination and DNA repair. Endonuclease that resolves HJ intermediates. Cleaves cruciform DNA by making single-stranded nicks across the HJ at symmetrical positions within the homologous arms, yielding a 5'-phosphate and a 3'-hydroxyl group; requires a central core of homology in the junction. The consensus cleavage sequence is 5'-(A/T)TT(C/G)-3'. Cleavage occurs on the 3'-side of the TT dinucleotide at the point of strand exchange. HJ branch migration catalyzed by RuvA-RuvB allows RuvC to scan DNA until it finds its consensus sequence, where it cleaves and resolves the cruciform DNA. This is Crossover junction endodeoxyribonuclease RuvC from Xanthomonas euvesicatoria pv. vesicatoria (strain 85-10) (Xanthomonas campestris pv. vesicatoria).